The following is a 608-amino-acid chain: UvrABC system protein C (608 aa).

The GIY-YIG domain maps to 13–91 (HDPGVYRMFD…IKTFQPRYNV (79 aa)). Residues 201-236 (QQVLDHLIAKMETASRALDFENAARFRDQIQAVRAV) form the UVR domain.

The protein belongs to the UvrC family. As to quaternary structure, interacts with UvrB in an incision complex.

It localises to the cytoplasm. The UvrABC repair system catalyzes the recognition and processing of DNA lesions. UvrC both incises the 5' and 3' sides of the lesion. The N-terminal half is responsible for the 3' incision and the C-terminal half is responsible for the 5' incision. This is UvrABC system protein C from Actinobacillus succinogenes (strain ATCC 55618 / DSM 22257 / CCUG 43843 / 130Z).